Consider the following 250-residue polypeptide: ATP synthase subunit a (250 aa).

6 helical membrane-spanning segments follow: residues 29 to 49, 84 to 104, 114 to 134, 143 to 163, 189 to 209, and 216 to 236; these read ASLFMVATVACAAGFLYFATS, FFPMVFSLFMFVLTANLLGMM, IVVTFALAIFVIGTVLVYGFY, LFVPSGVPGALLLLVVPIEVI, VFAGFVASLGSLGALGVGGAL, and VALTGLEFLVAFLQAYVFAVL.

Belongs to the ATPase A chain family. In terms of assembly, F-type ATPases have 2 components, CF(1) - the catalytic core - and CF(0) - the membrane proton channel. CF(1) has five subunits: alpha(3), beta(3), gamma(1), delta(1), epsilon(1). CF(0) has three main subunits: a(1), b(2) and c(9-12). The alpha and beta chains form an alternating ring which encloses part of the gamma chain. CF(1) is attached to CF(0) by a central stalk formed by the gamma and epsilon chains, while a peripheral stalk is formed by the delta and b chains.

The protein localises to the cell inner membrane. Its function is as follows. Key component of the proton channel; it plays a direct role in the translocation of protons across the membrane. The polypeptide is ATP synthase subunit a (Allorhizobium ampelinum (strain ATCC BAA-846 / DSM 112012 / S4) (Agrobacterium vitis (strain S4))).